The chain runs to 200 residues: Insulin, isoform 2 (200 aa).

Positions 148 to 200 (EVDSSPQPQGSESLPAQPPAQPAPQPEPQQAREPSPEVSCCGLWPRRPQRSQN) are disordered. Residues 163-174 (AQPPAQPAPQPE) are compositionally biased toward pro residues. Residues 175–184 (PQQAREPSPE) are compositionally biased toward low complexity.

Expressed in pancreas, eye and, to a lower extent, in limb.

The sequence is that of Insulin, isoform 2 (INS-IGF2) from Homo sapiens (Human).